The sequence spans 499 residues: Zinc finger protein PLAG1 (499 aa).

The tract at residues 1-33 (MATVIPGDLSEVRDTQKAPSGKRKRGESKPRKN) is disordered. Positions 2 to 84 (ATVIPGDLSE…SKYKLQRHMA (83 aa)) are interaction with KPNA2. Positions 22–25 (KRKR) match the Nuclear localization signal motif. C2H2-type zinc fingers lie at residues 34-56 (FPCQ…SFSH), 62-86 (YKCT…MATH), 92-114 (HKCN…LHTH), 121-143 (FKCE…LALH), 150-172 (LTCK…LKSH), 185-207 (HQCE…MVVH), and 213-236 (FLCQ…KKSH). The decreased nuclear import with localization in the nucleus but also in the cytoplasm stretch occupies residues 41–242 (KAFNSVEKLK…KKSHNQELLK (202 aa)). The segment at 243–383 (VKTEPVDFLD…SQASSSKLGL (141 aa)) is repression domain; contains 3 sumoylation motifs and massively decrease transcription activity. Positions 243-499 (VKTEPVDFLD…TLPRFHQAFQ (257 aa)) are activates transcription; Inhibition of nuclear import due to lack of NLS and KPNA2 interaction. Residues Lys244 and Lys263 each participate in a glycyl lysine isopeptide (Lys-Gly) (interchain with G-Cter in SUMO) cross-link. The disordered stretch occupies residues 364–400 (QGGAPSSSQDSQASSSKLGLEPQSGSPDDGAGDLSLS). Positions 369 to 379 (SSSQDSQASSS) are enriched in low complexity. Positions 384-499 (EPQSGSPDDG…TLPRFHQAFQ (116 aa)) are massively activates transcription.

The protein belongs to the krueppel C2H2-type zinc-finger protein family. In terms of assembly, interacts with KPNA2, which escorts protein to the nucleus via interaction with nuclear localization signal. Interacts with E3 SUMO-protein ligase PIAS1, PIAS2 and PIAS4. Post-translationally, sumoylated with SUMO1; which inhibits transcriptional activity, but does not affect nuclear localization. Blockers of sumoylation pathway such as SENP3 and inactive UBE2I increases transcriptional capacity. Sumoylation is increased in the presence of PIAS1. Acetylated by lysine acetyltransferase EP300; which activates transcriptional capacity. Lysine residues that are sumoylated also seem to be target for acetylation. Expressed in heart, spleen, lung, kidney, brain, testis and epididymis but not in salivary glands.

It localises to the nucleus. In terms of biological role, transcription factor whose activation results in up-regulation of target genes, such as IGFII, leading to uncontrolled cell proliferation: when overexpressed in cultured cells, higher proliferation rate and transformation are observed. Other target genes such as CRLF1, CRABP2, CRIP2, PIGF are strongly induced in cells with PLAG1 induction. Proto-oncogene whose ectopic expression can trigger the development of pleomorphic adenomas of the salivary gland and lipoblastomas. Cooperates with CBFB-MYH11. This is Zinc finger protein PLAG1 (Plag1) from Rattus norvegicus (Rat).